A 245-amino-acid chain; its full sequence is Ribosomal RNA small subunit methyltransferase G (245 aa).

S-adenosyl-L-methionine contacts are provided by residues Gly-79, Phe-84, 130–131 (AE), and Arg-150.

It belongs to the methyltransferase superfamily. RNA methyltransferase RsmG family.

It localises to the cytoplasm. Its function is as follows. Specifically methylates the N7 position of a guanine in 16S rRNA. The sequence is that of Ribosomal RNA small subunit methyltransferase G from Limosilactobacillus fermentum (strain NBRC 3956 / LMG 18251) (Lactobacillus fermentum).